A 276-amino-acid chain; its full sequence is NADPH-dependent 7-cyano-7-deazaguanine reductase (276 aa).

83–85 (IES) lines the substrate pocket. An NADPH-binding site is contributed by 85–86 (SK). The active-site Thioimide intermediate is Cys-184. Asp-191 (proton donor) is an active-site residue. 223 to 224 (HE) contributes to the substrate binding site. Residue 252–253 (RG) coordinates NADPH.

It belongs to the GTP cyclohydrolase I family. QueF type 2 subfamily. Homodimer.

It is found in the cytoplasm. The enzyme catalyses 7-aminomethyl-7-carbaguanine + 2 NADP(+) = 7-cyano-7-deazaguanine + 2 NADPH + 3 H(+). The protein operates within tRNA modification; tRNA-queuosine biosynthesis. Catalyzes the NADPH-dependent reduction of 7-cyano-7-deazaguanine (preQ0) to 7-aminomethyl-7-deazaguanine (preQ1). This is NADPH-dependent 7-cyano-7-deazaguanine reductase from Pseudomonas syringae pv. syringae (strain B728a).